An 84-amino-acid polypeptide reads, in one-letter code: Beta/gamma-crystallin (84 aa).

2 Beta/gamma crystallin 'Greek key' domains span residues 2 to 42 and 43 to 84; these read GKII…IVES and GTWF…VKQQ. The interval 64 to 84 is disordered; the sequence is KYPNPGSWGGNDDELSSVKQQ.

The protein belongs to the beta/gamma-crystallin family. In terms of assembly, monomer. Palps of larvae and otolith of the light-sensing ocellus.

Its function is as follows. Structural component of the neuroectodermal visual system. The protein is Beta/gamma-crystallin of Ciona intestinalis (Transparent sea squirt).